Reading from the N-terminus, the 176-residue chain is MAASTDVAGLEESFRKFAIHGDPKASGHEMNGKNWAKLCKDCKVADGKAVTGTDVDIVFSKVKAKSARVINYEEFKKALEELAPKRFKGKSKEEAFDAICQLVAGKEPANVGVTKAKTGGAVERLTDTSKYTGSHKERFDESGKGKGIAGRQDILDDSGYVSAYKNAGTYDAKVKK.

Alanine 2 carries the post-translational modification N-acetylalanine.

This sequence belongs to the TPPP family.

Its subcellular location is the cytoplasm. The protein resides in the cytoskeleton. Its function is as follows. Regulator of microtubule dynamic that has microtubule bundling activity. Required for embryo implantation; possibly by regulating beta-catenin. Also required for decidualization via regulation of beta-catenin. In Bos taurus (Bovine), this protein is Tubulin polymerization-promoting protein family member 3 (TPPP3).